Consider the following 383-residue polypeptide: Probable 2-succinylbenzoate--CoA ligase (383 aa).

Belongs to the ATP-dependent AMP-binding enzyme family. MenE subfamily.

It catalyses the reaction 2-succinylbenzoate + ATP + CoA = 2-succinylbenzoyl-CoA + AMP + diphosphate. Its pathway is quinol/quinone metabolism; 1,4-dihydroxy-2-naphthoate biosynthesis; 1,4-dihydroxy-2-naphthoate from chorismate: step 5/7. It functions in the pathway quinol/quinone metabolism; menaquinone biosynthesis. In terms of biological role, converts 2-succinylbenzoate (OSB) to 2-succinylbenzoyl-CoA (OSB-CoA). May be involved in the biosynthesis of menaquinone. This chain is Probable 2-succinylbenzoate--CoA ligase (menE), found in Mycobacterium tuberculosis (strain CDC 1551 / Oshkosh).